The chain runs to 331 residues: Holliday junction branch migration complex subunit RuvB (331 aa).

The large ATPase domain (RuvB-L) stretch occupies residues 1–178 (MRNSIFEQEE…FGITLRLDFY (178 aa)). ATP is bound by residues Leu-17, Arg-18, Gly-59, Lys-62, Thr-63, Thr-64, 125–127 (EDY), Arg-168, Tyr-178, and Arg-215. Mg(2+) is bound at residue Thr-63. The interval 179-249 (TVSELLQLLQ…FADLALNKME (71 aa)) is small ATPAse domain (RuvB-S). The tract at residues 252-331 (QFGLDKLDYT…LSTINSARLP (80 aa)) is head domain (RuvB-H). 2 residues coordinate DNA: Arg-307 and Arg-312.

The protein belongs to the RuvB family. In terms of assembly, homohexamer. Forms an RuvA(8)-RuvB(12)-Holliday junction (HJ) complex. HJ DNA is sandwiched between 2 RuvA tetramers; dsDNA enters through RuvA and exits via RuvB. An RuvB hexamer assembles on each DNA strand where it exits the tetramer. Each RuvB hexamer is contacted by two RuvA subunits (via domain III) on 2 adjacent RuvB subunits; this complex drives branch migration. In the full resolvosome a probable DNA-RuvA(4)-RuvB(12)-RuvC(2) complex forms which resolves the HJ.

It localises to the cytoplasm. The enzyme catalyses ATP + H2O = ADP + phosphate + H(+). Its function is as follows. The RuvA-RuvB-RuvC complex processes Holliday junction (HJ) DNA during genetic recombination and DNA repair, while the RuvA-RuvB complex plays an important role in the rescue of blocked DNA replication forks via replication fork reversal (RFR). RuvA specifically binds to HJ cruciform DNA, conferring on it an open structure. The RuvB hexamer acts as an ATP-dependent pump, pulling dsDNA into and through the RuvAB complex. RuvB forms 2 homohexamers on either side of HJ DNA bound by 1 or 2 RuvA tetramers; 4 subunits per hexamer contact DNA at a time. Coordinated motions by a converter formed by DNA-disengaged RuvB subunits stimulates ATP hydrolysis and nucleotide exchange. Immobilization of the converter enables RuvB to convert the ATP-contained energy into a lever motion, pulling 2 nucleotides of DNA out of the RuvA tetramer per ATP hydrolyzed, thus driving DNA branch migration. The RuvB motors rotate together with the DNA substrate, which together with the progressing nucleotide cycle form the mechanistic basis for DNA recombination by continuous HJ branch migration. Branch migration allows RuvC to scan DNA until it finds its consensus sequence, where it cleaves and resolves cruciform DNA. The polypeptide is Holliday junction branch migration complex subunit RuvB (Neorickettsia sennetsu (strain ATCC VR-367 / Miyayama) (Ehrlichia sennetsu)).